We begin with the raw amino-acid sequence, 1464 residues long: Gag-Pol polyprotein (1464 aa).

A lipid anchor (N-myristoyl glycine; by host) is attached at Gly2. An interaction with Gp41 region spans residues 7–31; it reads VLRGKKADELEKIRLRPSGKKKYRL. The Nuclear export signal motif lies at 16 to 22; it reads LEKIRLR. Positions 26–32 match the Nuclear localization signal motif; sequence KKKYRLK. Residues 108 to 146 are disordered; the sequence is LGAETGTAEKMPSTSRPTAPPSGRGRNFPVQQTGGGNYI. Positions 192–229 are interaction with human PPIA/CYPA and NUP153; sequence NCVGDHQAAMQIIREIINDEAADWDAQHPIPGPLPAGQ. A dimerization/Multimerization of capsid protein p24 region spans residues 280 to 366; it reads YNPTNILDVK…GGPGQKARLM (87 aa). CCHC-type zinc fingers lie at residues 390-407 and 411-428; these read IRCW…QCRA and QGCW…KCPE. The disordered stretch occupies residues 434–509; that stretch reads LRDGSMGKEA…GKSTSQRGDR (76 aa). A compositionally biased stretch (low complexity) spans 459–468; that stretch reads STPSRSSSGS. Residues 477–492 are compositionally biased toward basic and acidic residues; sequence ERAEGAEGETIQRGDG. Positions 514–518 are dimerization of protease; that stretch reads PQFSL. Positions 533 to 602 constitute a Peptidase A2 domain; the sequence is VEVLLDTGAD…TPINIFGRNI (70 aa). Asp538 acts as the For protease activity; shared with dimeric partner in catalysis. Dimerization of protease stretches follow at residues 562-568 and 601-613; these read GIGGFIN and NILT…LNLP. The Reverse transcriptase domain maps to 656-846; that stretch reads EGQLEEAPPT…PPLQWMGYEL (191 aa). Mg(2+) is bound by residues Asp722, Asp797, and Asp798. Residues 839–847 form an RT 'primer grip' region; it reads LQWMGYELW. The Tryptophan repeat motif motif lies at 1009–1025; the sequence is WEQWWDNYWQVTWIPEW. Residues 1045-1168 form the RNase H type-1 domain; it reads IPGAETFYTD…VDHLVSQGIR (124 aa). Residues Asp1054, Glu1089, Asp1109, and Asp1160 each contribute to the Mg(2+) site. Residues 1174–1215 form an Integrase-type zinc finger; the sequence is ERIEPAQEEHEKYHSNMKELTHKFGIPQLVARQIVNTCAQCQ. Zn(2+) contacts are provided by His1183, His1187, Cys1211, and Cys1214. One can recognise an Integrase catalytic domain in the interval 1224–1375; sequence QVNAEIGVWQ…TPAERLINMI (152 aa). Residues Asp1235, Asp1287, and Glu1323 each coordinate Mg(2+). A DNA-binding region (integrase-type) is located at residues 1394–1441; sequence FQVYYREGRDQLWKGPGELLWKGDGAVIVKVGADIKVIPRRKAKIIRD.

Homotrimer; further assembles as hexamers of trimers. Interacts with gp41 (via C-terminus). Interacts with host CALM1; this interaction induces a conformational change in the Matrix protein, triggering exposure of the myristate group. Interacts with host AP3D1; this interaction allows the polyprotein trafficking to multivesicular bodies during virus assembly. Part of the pre-integration complex (PIC) which is composed of viral genome, matrix protein, Vpr and integrase. In terms of assembly, homodimer; the homodimer further multimerizes as homohexamers or homopentamers. Interacts with human PPIA/CYPA. Interacts with human NUP153. Interacts with host PDZD8; this interaction stabilizes the capsid. Interacts with monkey TRIM5; this interaction destabilizes the capsid. As to quaternary structure, homodimer, whose active site consists of two apposed aspartic acid residues. Heterodimer of p66 RT and p51 RT (RT p66/p51). Heterodimerization of RT is essential for DNA polymerase activity. The overall folding of the subdomains is similar in p66 RT and p51 RT but the spatial arrangements of the subdomains are dramatically different. In terms of assembly, homotetramer; may further associate as a homohexadecamer. Part of the pre-integration complex (PIC) which is composed of viral genome, matrix protein, Vpr and integrase. Interacts with human SMARCB1/INI1 and human PSIP1/LEDGF isoform 1. Interacts with human KPNA3; this interaction might play a role in nuclear import of the pre-integration complex. Interacts with human NUP153; this interaction might play a role in nuclear import of the pre-integration complex. Mg(2+) serves as cofactor. Post-translationally, specific enzymatic cleavages by the viral protease yield mature proteins. The protease is released by autocatalytic cleavage. The polyprotein is cleaved during and after budding, this process is termed maturation. Proteolytic cleavage of p66 RT removes the RNase H domain to yield the p51 RT subunit. Nucleocapsid protein p7 might be further cleaved after virus entry.

It localises to the host cell membrane. Its subcellular location is the host endosome. The protein resides in the host multivesicular body. It is found in the virion membrane. The protein localises to the host nucleus. It localises to the host cytoplasm. Its subcellular location is the virion. It catalyses the reaction Endopeptidase for which the P1 residue is preferably hydrophobic.. It carries out the reaction Endohydrolysis of RNA in RNA/DNA hybrids. Three different cleavage modes: 1. sequence-specific internal cleavage of RNA. Human immunodeficiency virus type 1 and Moloney murine leukemia virus enzymes prefer to cleave the RNA strand one nucleotide away from the RNA-DNA junction. 2. RNA 5'-end directed cleavage 13-19 nucleotides from the RNA end. 3. DNA 3'-end directed cleavage 15-20 nucleotides away from the primer terminus.. The enzyme catalyses 3'-end directed exonucleolytic cleavage of viral RNA-DNA hybrid.. The catalysed reaction is DNA(n) + a 2'-deoxyribonucleoside 5'-triphosphate = DNA(n+1) + diphosphate. With respect to regulation, protease: The viral protease is inhibited by many synthetic protease inhibitors (PIs), such as amprenavir, atazanavir, indinavir, loprinavir, nelfinavir, ritonavir and saquinavir. Use of protease inhibitors in tritherapy regimens permit more ambitious therapeutic strategies. Reverse transcriptase/ribonuclease H: RT can be inhibited either by nucleoside RT inhibitors (NRTIs) or by non nucleoside RT inhibitors (NNRTIs). NRTIs act as chain terminators, whereas NNRTIs inhibit DNA polymerization by binding a small hydrophobic pocket near the RT active site and inducing an allosteric change in this region. Classical NRTIs are abacavir, adefovir (PMEA), didanosine (ddI), lamivudine (3TC), stavudine (d4T), tenofovir (PMPA), zalcitabine (ddC), and zidovudine (AZT). Classical NNRTIs are atevirdine (BHAP U-87201E), delavirdine, efavirenz (DMP-266), emivirine (I-EBU), and nevirapine (BI-RG-587). The tritherapies used as a basic effective treatment of AIDS associate two NRTIs and one NNRTI. Mediates, with Gag polyprotein, the essential events in virion assembly, including binding the plasma membrane, making the protein-protein interactions necessary to create spherical particles, recruiting the viral Env proteins, and packaging the genomic RNA via direct interactions with the RNA packaging sequence (Psi). Gag-Pol polyprotein may regulate its own translation, by the binding genomic RNA in the 5'-UTR. At low concentration, the polyprotein would promote translation, whereas at high concentration, the polyprotein would encapsidate genomic RNA and then shut off translation. Functionally, targets the polyprotein to the plasma membrane via a multipartite membrane-binding signal, that includes its myristoylated N-terminus. Matrix protein is part of the pre-integration complex. Implicated in the release from host cell mediated by Vpu. Binds to RNA. In terms of biological role, forms the conical core that encapsulates the genomic RNA-nucleocapsid complex in the virion. Most core are conical, with only 7% tubular. The core is constituted by capsid protein hexamer subunits. The core is disassembled soon after virion entry. Host restriction factors such as TRIM5-alpha or TRIMCyp bind retroviral capsids and cause premature capsid disassembly, leading to blocks in reverse transcription. Capsid restriction by TRIM5 is one of the factors which restricts HIV-1 to the human species. Host PIN1 apparently facilitates the virion uncoating. On the other hand, interactions with PDZD8 or CYPA stabilize the capsid. Its function is as follows. Encapsulates and protects viral dimeric unspliced genomic RNA (gRNA). Binds these RNAs through its zinc fingers. Acts as a nucleic acid chaperone which is involved in rearangement of nucleic acid secondary structure during gRNA retrotranscription. Also facilitates template switch leading to recombination. As part of the polyprotein, participates in gRNA dimerization, packaging, tRNA incorporation and virion assembly. Aspartyl protease that mediates proteolytic cleavages of Gag and Gag-Pol polyproteins during or shortly after the release of the virion from the plasma membrane. Cleavages take place as an ordered, step-wise cascade to yield mature proteins. This process is called maturation. Displays maximal activity during the budding process just prior to particle release from the cell. Also cleaves Nef and Vif, probably concomitantly with viral structural proteins on maturation of virus particles. Hydrolyzes host EIF4GI and PABP1 in order to shut off the capped cellular mRNA translation. The resulting inhibition of cellular protein synthesis serves to ensure maximal viral gene expression and to evade host immune response. Functionally, multifunctional enzyme that converts the viral RNA genome into dsDNA in the cytoplasm, shortly after virus entry into the cell. This enzyme displays a DNA polymerase activity that can copy either DNA or RNA templates, and a ribonuclease H (RNase H) activity that cleaves the RNA strand of RNA-DNA heteroduplexes in a partially processive 3' to 5' endonucleasic mode. Conversion of viral genomic RNA into dsDNA requires many steps. A tRNA(3)-Lys binds to the primer-binding site (PBS) situated at the 5'-end of the viral RNA. RT uses the 3' end of the tRNA primer to perform a short round of RNA-dependent minus-strand DNA synthesis. The reading proceeds through the U5 region and ends after the repeated (R) region which is present at both ends of viral RNA. The portion of the RNA-DNA heteroduplex is digested by the RNase H, resulting in a ssDNA product attached to the tRNA primer. This ssDNA/tRNA hybridizes with the identical R region situated at the 3' end of viral RNA. This template exchange, known as minus-strand DNA strong stop transfer, can be either intra- or intermolecular. RT uses the 3' end of this newly synthesized short ssDNA to perform the RNA-dependent minus-strand DNA synthesis of the whole template. RNase H digests the RNA template except for two polypurine tracts (PPTs) situated at the 5'-end and near the center of the genome. It is not clear if both polymerase and RNase H activities are simultaneous. RNase H probably can proceed both in a polymerase-dependent (RNA cut into small fragments by the same RT performing DNA synthesis) and a polymerase-independent mode (cleavage of remaining RNA fragments by free RTs). Secondly, RT performs DNA-directed plus-strand DNA synthesis using the PPTs that have not been removed by RNase H as primers. PPTs and tRNA primers are then removed by RNase H. The 3' and 5' ssDNA PBS regions hybridize to form a circular dsDNA intermediate. Strand displacement synthesis by RT to the PBS and PPT ends produces a blunt ended, linear dsDNA copy of the viral genome that includes long terminal repeats (LTRs) at both ends. In terms of biological role, catalyzes viral DNA integration into the host chromosome, by performing a series of DNA cutting and joining reactions. This enzyme activity takes place after virion entry into a cell and reverse transcription of the RNA genome in dsDNA. The first step in the integration process is 3' processing. This step requires a complex comprising the viral genome, matrix protein, Vpr and integrase. This complex is called the pre-integration complex (PIC). The integrase protein removes 2 nucleotides from each 3' end of the viral DNA, leaving recessed CA OH's at the 3' ends. In the second step, the PIC enters cell nucleus. This process is mediated through integrase and Vpr proteins, and allows the virus to infect a non dividing cell. This ability to enter the nucleus is specific of lentiviruses, other retroviruses cannot and rely on cell division to access cell chromosomes. In the third step, termed strand transfer, the integrase protein joins the previously processed 3' ends to the 5' ends of strands of target cellular DNA at the site of integration. The 5'-ends are produced by integrase-catalyzed staggered cuts, 5 bp apart. A Y-shaped, gapped, recombination intermediate results, with the 5'-ends of the viral DNA strands and the 3' ends of target DNA strands remaining unjoined, flanking a gap of 5 bp. The last step is viral DNA integration into host chromosome. This involves host DNA repair synthesis in which the 5 bp gaps between the unjoined strands are filled in and then ligated. Since this process occurs at both cuts flanking the HIV genome, a 5 bp duplication of host DNA is produced at the ends of HIV-1 integration. Alternatively, Integrase may catalyze the excision of viral DNA just after strand transfer, this is termed disintegration. In Homo sapiens (Human), this protein is Gag-Pol polyprotein (gag-pol).